Reading from the N-terminus, the 483-residue chain is Regulatory protein ViaA (483 aa).

This sequence belongs to the ViaA family. As to quaternary structure, homodimer. Interacts with RavA.

The protein resides in the cytoplasm. In terms of biological role, component of the RavA-ViaA chaperone complex, which may act on the membrane to optimize the function of some of the respiratory chains. ViaA stimulates the ATPase activity of RavA. In Escherichia coli (strain SMS-3-5 / SECEC), this protein is Regulatory protein ViaA.